A 116-amino-acid chain; its full sequence is Protein Wnt-5(I) (116 aa).

Ser1 carries the O-palmitoleoyl serine; by PORCN lipid modification. Asn69 carries N-linked (GlcNAc...) asparagine glycosylation. A disulfide bond links Cys82 and Cys97.

The protein belongs to the Wnt family. Palmitoleoylation is required for efficient binding to frizzled receptors. Depalmitoleoylation leads to Wnt signaling pathway inhibition.

The protein resides in the secreted. It localises to the extracellular space. The protein localises to the extracellular matrix. Functionally, ligand for members of the frizzled family of seven transmembrane receptors. Probable developmental protein. May be a signaling molecule which affects the development of discrete regions of tissues. Is likely to signal over only few cell diameters. This Eptatretus stoutii (Pacific hagfish) protein is Protein Wnt-5(I) (WNT-5(I)).